The sequence spans 560 residues: Thermosome subunit 1 (560 aa).

The segment at 525 to 550 (LSGGQTGSDDDDGGAPGGMGGGMGGM) is disordered. Over residues 538–550 (GAPGGMGGGMGGM) the composition is skewed to gly residues.

This sequence belongs to the TCP-1 chaperonin family. The thermosome or CCT complex is a oligomeric complex of two octameric double-ring structures; the complex is probably a heterooligomer of CCT1, CCT2 and CCT3 with yet unknown stoichiometry.

Its function is as follows. Molecular chaperone that assists in the folding or refolding of nascent or denatured proteins along with ATP hydrolysis. ATPase activity is highest in thermosome assemblies containing CCT1:CCT2, followed by assemblies containing CCT1:CCT2:CCT3. Required for thermosome ATPase activity. Not required for growth. The sequence is that of Thermosome subunit 1 (cct1) from Haloferax volcanii (strain ATCC 29605 / DSM 3757 / JCM 8879 / NBRC 14742 / NCIMB 2012 / VKM B-1768 / DS2) (Halobacterium volcanii).